Reading from the N-terminus, the 464-residue chain is Formin-like protein 19 (464 aa).

The disordered stretch occupies residues 1–74; it reads MSLVDISGAY…PRPCSRPPKT (74 aa). Over residues 14-70 the composition is skewed to pro residues; sequence PLPPPPPPLMRRRAPLPPPPPPPLMRRRAPPPPPPPLMRRRAPPPPPPPPLPRPCSR. Residues 68–462 form the FH2 domain; it reads CSRPPKTKCS…KAAKEAEMEK (395 aa).

This sequence belongs to the formin-like family. Class-II subfamily.

This Arabidopsis thaliana (Mouse-ear cress) protein is Formin-like protein 19 (FH19).